Reading from the N-terminus, the 166-residue chain is Lutropin subunit beta (166 aa).

The first 21 residues, 1-21 (MGGAQVLLLLTLLGTPLVTHG), serve as a signal peptide directing secretion. 6 disulfides stabilise this stretch: C56–C104, C70–C119, C73–C157, C81–C135, C85–C137, and C140–C147. N-linked (GlcNAc...) asparagine glycosylation is present at N60.

The protein belongs to the glycoprotein hormones subunit beta family. In terms of assembly, heterodimer of a common alpha chain and a unique beta chain which confers biological specificity to thyrotropin, lutropin, follitropin and gonadotropin.

The protein localises to the secreted. Promotes spermatogenesis and ovulation by stimulating the testes and ovaries to synthesize steroids. The sequence is that of Lutropin subunit beta (LHB) from Coturnix japonica (Japanese quail).